The sequence spans 187 residues: Orotate phosphoribosyltransferase (187 aa).

5-phospho-alpha-D-ribose 1-diphosphate contacts are provided by residues Arg-103, Lys-104, Lys-107, and 129 to 137 (EDVTTSGGS). Residues Thr-133 and Arg-161 each coordinate orotate.

It belongs to the purine/pyrimidine phosphoribosyltransferase family. PyrE subfamily. In terms of assembly, homodimer. Requires Mg(2+) as cofactor.

It carries out the reaction orotidine 5'-phosphate + diphosphate = orotate + 5-phospho-alpha-D-ribose 1-diphosphate. The protein operates within pyrimidine metabolism; UMP biosynthesis via de novo pathway; UMP from orotate: step 1/2. Its function is as follows. Catalyzes the transfer of a ribosyl phosphate group from 5-phosphoribose 1-diphosphate to orotate, leading to the formation of orotidine monophosphate (OMP). This chain is Orotate phosphoribosyltransferase, found in Methanosarcina acetivorans (strain ATCC 35395 / DSM 2834 / JCM 12185 / C2A).